The following is a 623-amino-acid chain: MKCWRLSAILFLGFMLTSLSTARFVVEKNSLSVTSPEKIKGKHDSAIGNFGIPQYGGSMAGNVVYPKDNSKGCKDFDSSFKSRPGALPTILLLDRGSCFFALKVWNAQKAGASAVLVADDIEEPLITMDTPEEDVSSAKYIENITIPSALIGKSFGEKLKDAISGGDMVNVNLDWREAVPHPDDRVEYELWTNSNDECGVKCDMLIEFLKDFKGAAQILEKGGYTQFTPHYITWYCPHAFTLSKQCKSQCINHGRYCAPDPEQDFNTGYDGKDVVVENLRQLCVFKVAKETEKSWVWWDYVTDFQIRCPMKEKKYNKECANSVIKSLGLDVEKIDKCMGDPNADTENSILKEEQDAQIGKGTRGDVTILPTLVVNNRQYRGKLEKGAVLKAICSGFEETTDPAVCLSNDVETNECLTNNGGCWQDKTANIAACKDTFRGRVCECPLVDGVQFKGDGYTTCEVSGHGRCKINNGGCWHDARNGHAFSACLDDGGVKCQCPAGFKGDGVKNCEDIDECKDKKACQCPECSCKNTWGSYNCSCSGDLLYIKDQDTCISKTASQAKSTWAAFWVVLIALAMIAGGGFLVYKYRIRQYMDSEIRAIMAQYMPLDSQEEGPNHVNHQRG.

The N-terminal stretch at 1–22 (MKCWRLSAILFLGFMLTSLSTA) is a signal peptide. At 23–564 (RFVVEKNSLS…SKTASQAKST (542 aa)) the chain is on the lumenal side. Residues 54-163 (QYGGSMAGNV…SFGEKLKDAI (110 aa)) form the PA domain. N-linked (GlcNAc...) asparagine glycosylation occurs at Asn143. 2 consecutive EGF-like domains span residues 411-461 (ETNE…TTCE) and 464-511 (GHGR…KNCE). Intrachain disulfides connect Cys415–Cys433, Cys422–Cys442, Cys444–Cys460, Cys468–Cys488, Cys475–Cys496, and Cys498–Cys510. The EGF-like 3; calcium-binding domain occupies 512-554 (DIDECKDKKACQCPECSCKNTWGSYNCSCSGDLLYIKDQDTCI). Asn537 carries N-linked (GlcNAc...) asparagine glycosylation. Cys540 and Cys553 are disulfide-bonded. The chain crosses the membrane as a helical span at residues 565 to 585 (WAAFWVVLIALAMIAGGGFLV). At 586-623 (YKYRIRQYMDSEIRAIMAQYMPLDSQEEGPNHVNHQRG) the chain is on the cytoplasmic side. The Tyrosine-based internalization motif motif lies at 605–608 (YMPL).

This sequence belongs to the VSR (BP-80) family. As to quaternary structure, interacts with the N-terminal propeptide of aleurein (proaleurein).

It localises to the membrane. Its subcellular location is the golgi apparatus membrane. The protein localises to the cytoplasmic vesicle. The protein resides in the clathrin-coated vesicle membrane. It is found in the prevacuolar compartment membrane. Functionally, vacuolar-sorting receptor (VSR) involved in clathrin-coated vesicles sorting from Golgi apparatus to vacuoles. Seems to binds preferentially proteins containing a N-terminal NPIR motif. The sequence is that of Vacuolar-sorting receptor 1 (BP80) from Pisum sativum (Garden pea).